The sequence spans 419 residues: Equilibrative nucleotide transporter 5 (419 aa).

A run of 11 helical transmembrane segments spans residues Met20 to Val40, Val56 to Glu76, Leu86 to Thr106, Gly108 to Ala128, Leu142 to Thr162, Ile186 to Phe206, Tyr265 to Tyr285, Gly292 to Gly312, Lys327 to Ala347, Trp354 to Leu374, and Leu393 to Ile413.

Belongs to the SLC29A/ENT transporter (TC 2.A.57) family.

The protein resides in the cell membrane. May be involved in nucleoside transport. The sequence is that of Equilibrative nucleotide transporter 5 (ENT5) from Arabidopsis thaliana (Mouse-ear cress).